The primary structure comprises 801 residues: Phosphorus acquisition-controlling protein (801 aa).

4 disordered regions span residues 292–317 (GSSP…DLAR), 366–607 (APSQ…SAGA), 628–725 (NTVP…ASTV), and 756–801 (MKMQ…AMDE). A compositionally biased stretch (low complexity) spans 374–386 (PLTPLIPTSSSST). Composition is skewed to polar residues over residues 387 to 401 (AGVT…SPEN) and 459 to 472 (KLSS…SVVG). The interval 446-540 (PGIASPATPA…PPSPAVAKPL (95 aa)) is interaction with negative regulatory factor. The span at 477–486 (DPMDPDHIEN) shows a compositional bias: basic and acidic residues. Residues 535 to 554 (AVAKPLALPSAALSSPQLKP) are compositionally biased toward low complexity. Over residues 637-646 (SELSTNLTSK) the composition is skewed to polar residues. In terms of domain architecture, bHLH spans 645–735 (SKRTSHKIAE…EMAIEYIKQL (91 aa)). A compositionally biased stretch (basic and acidic residues) spans 676-687 (PAKEGGDGDGDG). Over residues 690-699 (SSGGGGGSGG) the composition is skewed to gly residues. The segment covering 700 to 713 (ADREDKREKDKDKA) has biased composition (basic and acidic residues). Over residues 765 to 777 (GSGSSVGDAGDLG) the composition is skewed to low complexity.

As to quaternary structure, binds DNA as a dimer.

It localises to the nucleus. Factor that activates the transcription of structural genes for phosphorus acquisition. The sequence is that of Phosphorus acquisition-controlling protein (nuc-1) from Neurospora crassa (strain ATCC 24698 / 74-OR23-1A / CBS 708.71 / DSM 1257 / FGSC 987).